A 511-amino-acid chain; its full sequence is Cytochrome P450 714C3 (511 aa).

The Lumenal portion of the chain corresponds to 1–6; the sequence is MEKLLA. The helical; Signal-anchor for type III membrane protein transmembrane segment at 7–27 threads the bilayer; that stretch reads LIVVLVILLSLALFYLCNILW. Residues 28–511 lie on the Cytoplasmic side of the membrane; that stretch reads LRAVKIRKKL…GLPLMVTKLP (484 aa). Cys-458 provides a ligand contact to heme.

It belongs to the cytochrome P450 family. It depends on heme as a cofactor.

It is found in the membrane. The chain is Cytochrome P450 714C3 (CYP714C3) from Oryza sativa subsp. japonica (Rice).